A 647-amino-acid polypeptide reads, in one-letter code: Protein arginine N-methyltransferase 7 (647 aa).

2 consecutive SAM-dependent MTase PRMT-type domains span residues 12-332 (EREW…FSLW) and 337-647 (GKDK…SEDS). Catalysis depends on residues E140 and E149.

It belongs to the class I-like SAM-binding methyltransferase superfamily. Protein arginine N-methyltransferase family. PRMT7 subfamily.

Functionally, arginine methyltransferase that can both catalyze the formation of omega-N monomethylarginine (MMA) and symmetrical dimethylarginine (sDMA). This is Protein arginine N-methyltransferase 7 (prmt-7) from Caenorhabditis elegans.